Here is a 138-residue protein sequence, read N- to C-terminus: Trypsin inhibitor DE5 alpha chain (138 aa).

A disulfide bond links cysteine 40 and cysteine 86.

It belongs to the protease inhibitor I3 (leguminous Kunitz-type inhibitor) family. Heterodimer of an alpha and a beta chain linked by a disulfide bond.

Its function is as follows. Inhibition of trypsin. The protein is Trypsin inhibitor DE5 alpha chain of Adenanthera pavonina (Sandal bead tree).